Here is a 248-residue protein sequence, read N- to C-terminus: Probable transcriptional regulatory protein FTF0655 (248 aa).

The protein belongs to the TACO1 family.

It is found in the cytoplasm. The protein is Probable transcriptional regulatory protein FTF0655 of Francisella tularensis subsp. tularensis (strain FSC 198).